Consider the following 182-residue polypeptide: Auxin-responsive protein IAA9 (182 aa).

The segment at 1–41 (MELELGLAPPNSGHLVVDELSSSSSSGGGSGSAPVSASSAG) is disordered. The short motif at 3-7 (LELGL) is the EAR-like (transcriptional repression) element. A compositionally biased stretch (low complexity) spans 32-41 (SAPVSASSAG). In terms of domain architecture, PB1 spans 92–182 (ANYVKVKKEG…RSVKRLKILG (91 aa)).

The protein belongs to the Aux/IAA family. Homodimers and heterodimers. In terms of tissue distribution, expressed in etiolated shoots and flowers.

The protein resides in the nucleus. Aux/IAA proteins are short-lived transcriptional factors that function as repressors of early auxin response genes at low auxin concentrations. In Oryza sativa subsp. japonica (Rice), this protein is Auxin-responsive protein IAA9 (IAA9).